A 459-amino-acid chain; its full sequence is DNA polymerase subunit gamma-2 (459 aa).

Heterotrimer composed of a catalytic subunit and a homodimer of accessory subunits (POLG:POLG2).

The protein localises to the mitochondrion. The protein resides in the mitochondrion matrix. It localises to the mitochondrion nucleoid. Accessory subunit of DNA polymerase gamma solely responsible for replication of mitochondrial DNA (mtDNA). Acts as an allosteric regulator of the holoenzyme activities. Enhances the polymerase activity and the processivity of POLG by increasing its interactions with the DNA template. Suppresses POLG exonucleolytic proofreading especially toward homopolymeric templates bearing mismatched termini. Binds to single-stranded DNA. The sequence is that of DNA polymerase subunit gamma-2 (Polg2) from Mus musculus (Mouse).